A 196-amino-acid chain; its full sequence is Peroxynitrite isomerase (196 aa).

Positions 1–29 (MSDENPLQPPWLNAPPVDPYPYEESHDLR) are disordered. Over residues 7–19 (LQPPWLNAPPVDP) the composition is skewed to pro residues. A GXWXGXG motif is present at residues 46-52 (GVWRGRG). Position 186 (H186) interacts with heme b.

This sequence belongs to the nitrobindin family. Homodimer. Requires heme b as cofactor.

The catalysed reaction is peroxynitrite = nitrate. The protein operates within nitrogen metabolism. Functionally, heme-binding protein able to scavenge peroxynitrite and to protect free L-tyrosine against peroxynitrite-mediated nitration, by acting as a peroxynitrite isomerase that converts peroxynitrite to nitrate. Therefore, this protein likely plays a role in peroxynitrite sensing and in the detoxification of reactive nitrogen and oxygen species (RNS and ROS, respectively). Is able to bind nitric oxide (NO) in vitro, but may act as a sensor of peroxynitrite levels in vivo. The sequence is that of Peroxynitrite isomerase from Salinispora arenicola (strain CNS-205).